We begin with the raw amino-acid sequence, 261 residues long: NAD kinase (261 aa).

Asp-54 serves as the catalytic Proton acceptor. NAD(+) contacts are provided by residues 54-55 (DG), 123-124 (ND), Arg-150, Asp-152, and 163-168 (TAYSLS).

This sequence belongs to the NAD kinase family. Requires a divalent metal cation as cofactor.

The protein resides in the cytoplasm. The enzyme catalyses NAD(+) + ATP = ADP + NADP(+) + H(+). Functionally, involved in the regulation of the intracellular balance of NAD and NADP, and is a key enzyme in the biosynthesis of NADP. Catalyzes specifically the phosphorylation on 2'-hydroxyl of the adenosine moiety of NAD to yield NADP. The sequence is that of NAD kinase from Caldicellulosiruptor bescii (strain ATCC BAA-1888 / DSM 6725 / KCTC 15123 / Z-1320) (Anaerocellum thermophilum).